Consider the following 771-residue polypeptide: Caldesmon (771 aa).

Disordered regions lie at residues 23–91 (ERLS…ALLE) and 104–599 (LQEA…FSPK). The interval 26-199 (SYQRNDDDEE…PKEVPTEENQ (174 aa)) is myosin and calmodulin-binding. Position 27 is a phosphotyrosine (Tyr-27). Composition is skewed to basic and acidic residues over residues 47 to 67 (QERL…EKSE), 104 to 115 (LQEALERQKEFD), 139 to 155 (ITGK…RCEI), 170 to 194 (WRQD…KEVP), 203 to 215 (AVEK…EVVE), 240 to 435 (AADK…ESLP), 442 to 484 (SKKD…RELT), 509 to 518 (GSEKLKEKQQ), and 525 to 592 (DELK…EKKP). 10 repeat units span residues 251 to 265 (EREK…RLKA), 266 to 278 (EEEK…KQKA), 279 to 291 (EEEK…RERA), 294 to 306 (EEEK…RERA), 309 to 321 (EEER…RERA), 324 to 336 (EEER…RAKA), 337 to 349 (EEER…RAKA), 350 to 362 (EEER…RAKA), 363 to 375 (EKER…RERA), and 378 to 390 (EEEK…KARL). The segment at 251–390 (EREKLEAEEK…KRAAEEKARL (140 aa)) is 10 X 13 AA approximate tandem repeats. The tract at residues 523-580 (ELDELKKRREERRKILEEEEQKKKQEEAERKIREEEEKKRMKEEIERRRAEAAEKRQK) is tropomyosin-binding. A Phosphoserine; by CDK1 modification is found at Ser-597. The tract at residues 612-644 (LNKSAQKSGMKPAHTTAVVSKIDSRLEQYTSAV) is strong actin-binding. The tropomyosin-binding stretch occupies residues 622–632 (KPAHTTAVVSK). At Tyr-640 the chain carries Phosphotyrosine. Residues 674-680 (WEKGNVF) form a calmodulin-binding region. The disordered stretch occupies residues 676–771 (KGNVFSSPGG…NGLRQFEKEP (96 aa)). A compositionally biased stretch (polar residues) spans 679–691 (VFSSPGGTGTPNK). Residue Ser-682 is modified to Phosphoserine; by CDK1. A phosphothreonine; by CDK1 mark is found at Thr-688 and Thr-711. Position 717 is a phosphoserine; by CDK1 (Ser-717). Positions 723–742 (SDLRPGDVSGKRNLWEKQSV) are enriched in basic and acidic residues. The weak actin-binding stretch occupies residues 726–752 (RPGDVSGKRNLWEKQSVEKPAASSSKV).

This sequence belongs to the caldesmon family. In terms of processing, phosphorylated in non-muscle cells. Phosphorylation by CDK1 during mitosis causes caldesmon to dissociate from microfilaments. Phosphorylation reduces caldesmon binding to actin, myosin, and calmodulin as well as its inhibition of actomyosin ATPase activity. Phosphorylation also occurs in both quiescent and dividing smooth muscle cells with similar effects on the interaction with actin and calmodulin and on microfilaments reorganization. High-molecular-weight caldesmon (h-caldesmon) is predominantly expressed in smooth muscles, whereas low-molecular-weight caldesmon (l-caldesmon) is widely distributed in non-muscle tissues and cells. Not expressed in skeletal muscle or heart.

It localises to the cytoplasm. The protein localises to the cytoskeleton. It is found in the myofibril. The protein resides in the stress fiber. Its function is as follows. Actin- and myosin-binding protein implicated in the regulation of actomyosin interactions in smooth muscle and nonmuscle cells (could act as a bridge between myosin and actin filaments). Stimulates actin binding of tropomyosin which increases the stabilization of actin filament structure. In muscle tissues, inhibits the actomyosin ATPase by binding to F-actin. This inhibition is attenuated by calcium-calmodulin and is potentiated by tropomyosin. Interacts with actin, myosin, two molecules of tropomyosin and with calmodulin. Also plays an essential role during cellular mitosis and receptor capping. This chain is Caldesmon (CALD1), found in Gallus gallus (Chicken).